Reading from the N-terminus, the 117-residue chain is MQTIEIGNKAELQACKFLHTQELEILAHNFKALPYGEIDIIALDKDTLVFIEVKYRSKTKFAQAEEMLTYSKQQKLVNSASIYLQHNPQYQDYQCRFDLIAINESNINWIKNAFGVI.

The protein belongs to the UPF0102 family.

The protein is UPF0102 protein FTN_0424 of Francisella tularensis subsp. novicida (strain U112).